The following is a 2595-amino-acid chain: Glucosylceramide transporter ABCA12 (2595 aa).

Residues 23–43 traverse the membrane as a helical segment; the sequence is PLWTLVLILWPVIIFIILAIT. 19 N-linked (GlcNAc...) asparagine glycosylation sites follow: Asn156, Asn174, Asn214, Asn275, Asn333, Asn367, Asn383, Asn412, Asn435, Asn528, Asn543, Asn577, Asn608, Asn623, Asn648, Asn752, Asn826, Asn920, and Asn963. The next 3 membrane-spanning stretches (helical) occupy residues 1065–1085, 1112–1132, and 1145–1165; these read VSYSLPIVLMVAWVVFIAAFV, FAWLIESVGFLLVTIVILIII, and FILFLYFSDYSFSVIAMSYLI. A glycan (N-linked (GlcNAc...) asparagine) is linked at Asn1170. 3 helical membrane-spanning segments follow: residues 1174 to 1194, 1200 to 1220, and 1250 to 1270; these read IAALIGSLIYIIAFFPFIVLV, LSYVLKVFMSLLSPTAFSYAS, and FGWLCCLILADSFIYFLIAWY. Residues 1346–1577 form the ABC transporter 1 domain; it reads VALHGVTKIY…FGDGYHLTLT (232 aa). 1378 to 1385 provides a ligand contact to ATP; sequence GPNGAGKT. N-linked (GlcNAc...) asparagine glycosylation is found at Asn1524, Asn1663, and Asn1704. Residues 1747-1767 form a helical membrane-spanning segment; it reads LIAQVILPIVFVTTAMGLGTL. Residues Asn1769, Asn1819, Asn1835, Asn1876, Asn1921, and Asn1952 are each glycosylated (N-linked (GlcNAc...) asparagine). 4 helical membrane passes run 1979–1999, 2035–2055, 2072–2092, and 2103–2123; these read ATISSLIDILVALSILMGYSV, FIYDMVFYLVPVAFSIGIIAI, LLLLLFGYATFSWMYLLAGLF, and VCVNLFFGINSIVSLSVVYFL. Asn2178 is a glycosylation site (N-linked (GlcNAc...) asparagine). The helical transmembrane segment at 2187–2207 threads the bilayer; it reads GAMFVALVSQGTMFFSLRLLI. Residues Asn2208 and Asn2223 are each glycosylated (N-linked (GlcNAc...) asparagine). Positions 2254-2489 constitute an ABC transporter 2 domain; it reads VQLYCLTKTY…FGRGFTVKVH (236 aa). A helical membrane pass occupies residues 2270 to 2290; sequence IIAVNNISIGIPAGECFGLLG. Residue 2290–2297 coordinates ATP; sequence GVNGAGKT. Residues Asn2318, Asn2542, and Asn2547 are each glycosylated (N-linked (GlcNAc...) asparagine). Residues 2571-2595 are disordered; that stretch reads SYETADTSSQGSTISVDSQDDQMES. The span at 2574–2587 shows a compositional bias: polar residues; sequence TADTSSQGSTISVD.

It belongs to the ABC transporter superfamily. ABCA family. Interacts with NR1H2 and ABCA1; this interaction is required for ABCA1 localization to the cell surface and is necessary for its normal activity and stability. As to expression, mainly expressed in the stomach, placenta, testis and fetal brain. Expressed in the upper epidermal layers, mainly the granular layers, of skin. Expressed throughout the normal interfollicular epidermis with prominent expression in the stratum granulosum. Expressed in alpha and beta cells of pancreatic islets.

Its subcellular location is the cytoplasmic vesicle. The protein resides in the secretory vesicle membrane. It localises to the golgi apparatus membrane. It carries out the reaction ATP + H2O + phospholipidSide 1 = ADP + phosphate + phospholipidSide 2.. The catalysed reaction is a beta-D-glucosylceramide(in) + ATP + H2O = a beta-D-glucosylceramide(out) + ADP + phosphate + H(+). Its function is as follows. Transports lipids such as glucosylceramides from the outer to the inner leaflet of lamellar granules (LGs) membrane, whereby the lipids are finally transported to the keratinocyte periphery via the trans-Golgi network and LGs and released to the apical surface of the granular keratinocytes to form lipid lamellae in the stratum corneum of the epidermis, which is essential for skin barrier function. In the meantime, participates in the transport of the lamellar granules-associated proteolytic enzymes, in turn regulates desquamation and keratinocyte differentiation. Furthermore, is essential for the regulation of cellular cholesterol homeostasis by regulating ABCA1-dependent cholesterol efflux from macrophages through interaction with NR1H2 and ABCA1. Plays pleiotropic roles in regulating glucose stimulated insulin secretion from beta cells, regulating the morphology and fusion of insulin granules, lipid raft abundance and the actin cytoskeleton. Also involved in lung surfactant biogenesis. The polypeptide is Glucosylceramide transporter ABCA12 (Homo sapiens (Human)).